The following is a 170-amino-acid chain: Tubulin polymerization-promoting protein family member 2 (170 aa).

A disordered region spans residues 127–147 (TGTHKERFDESGKGKGIAGRE). Over residues 129–139 (THKERFDESGK) the composition is skewed to basic and acidic residues.

Belongs to the TPPP family.

Its subcellular location is the cytoplasm. The protein localises to the cytosol. It is found in the cell projection. The protein resides in the cilium. It localises to the flagellum. In terms of biological role, probable regulator of microtubule dynamics required for sperm motility. In contrast to other members of the family, has no microtubule bundling activity. The chain is Tubulin polymerization-promoting protein family member 2 (TPPP2) from Macaca fascicularis (Crab-eating macaque).